Reading from the N-terminus, the 143-residue chain is AP-2 complex subunit sigma (143 aa).

Belongs to the adaptor complexes small subunit family. Adaptor protein complex 2 (AP-2) is a heterotetramer composed of two large adaptins (alpha-type subunit apl3 and beta-type subunit apl1), a medium chain (mu-type subunit apm4) and a small adaptin (sigma-type subunit aps2).

It localises to the cell membrane. It is found in the membrane. The protein localises to the coated pit. In terms of biological role, component of the adaptor complexes which link clathrin to receptors in coated vesicles. Clathrin-associated protein complexes are believed to interact with the cytoplasmic tails of membrane proteins, leading to their selection and concentration. The polypeptide is AP-2 complex subunit sigma (aps2) (Schizosaccharomyces pombe (strain 972 / ATCC 24843) (Fission yeast)).